A 211-amino-acid polypeptide reads, in one-letter code: Small ribosomal subunit protein uS3 (211 aa).

The KH type-2 domain occupies 38 to 106 (LRKFIKKAFY…NIELNIIEVK (69 aa)).

This sequence belongs to the universal ribosomal protein uS3 family. Part of the 30S ribosomal subunit. Forms a tight complex with proteins S10 and S14.

Binds the lower part of the 30S subunit head. Binds mRNA in the 70S ribosome, positioning it for translation. The protein is Small ribosomal subunit protein uS3 of Ehrlichia canis (strain Jake).